Consider the following 191-residue polypeptide: Protein GrpE (191 aa).

The span at 1 to 15 shows a compositional bias: basic and acidic residues; it reads MGKEEKNNIEDKALD. Positions 1–35 are disordered; that stretch reads MGKEEKNNIEDKALDNEQEMDQESTSKAVEELSIE.

The protein belongs to the GrpE family. In terms of assembly, homodimer.

It is found in the cytoplasm. In terms of biological role, participates actively in the response to hyperosmotic and heat shock by preventing the aggregation of stress-denatured proteins, in association with DnaK and GrpE. It is the nucleotide exchange factor for DnaK and may function as a thermosensor. Unfolded proteins bind initially to DnaJ; upon interaction with the DnaJ-bound protein, DnaK hydrolyzes its bound ATP, resulting in the formation of a stable complex. GrpE releases ADP from DnaK; ATP binding to DnaK triggers the release of the substrate protein, thus completing the reaction cycle. Several rounds of ATP-dependent interactions between DnaJ, DnaK and GrpE are required for fully efficient folding. The chain is Protein GrpE from Francisella philomiragia subsp. philomiragia (strain ATCC 25017 / CCUG 19701 / FSC 153 / O#319-036).